Here is a 252-residue protein sequence, read N- to C-terminus: Phosphate import ATP-binding protein PstB (252 aa).

The region spanning 5–247 (LIASDVNIFY…PRDERTEAYV (243 aa)) is the ABC transporter domain. Residue 37 to 44 (GPSGCGKT) coordinates ATP.

This sequence belongs to the ABC transporter superfamily. Phosphate importer (TC 3.A.1.7) family. In terms of assembly, the complex is composed of two ATP-binding proteins (PstB), two transmembrane proteins (PstC and PstA) and a solute-binding protein (PstS).

The protein localises to the cell membrane. It carries out the reaction phosphate(out) + ATP + H2O = ADP + 2 phosphate(in) + H(+). Part of the ABC transporter complex PstSACB involved in phosphate import. Responsible for energy coupling to the transport system. This chain is Phosphate import ATP-binding protein PstB, found in Deinococcus geothermalis (strain DSM 11300 / CIP 105573 / AG-3a).